Consider the following 486-residue polypeptide: Lipase 1 (486 aa).

An intrachain disulfide couples C58 to C82. S193 acts as the Acyl-ester intermediate in catalysis. D303 functions as the Charge relay system in the catalytic mechanism. N332 carries an N-linked (GlcNAc...) asparagine glycan. Catalysis depends on H392, which acts as the Charge relay system.

This sequence belongs to the type-B carboxylesterase/lipase family.

The catalysed reaction is a triacylglycerol + H2O = a diacylglycerol + a fatty acid + H(+). The polypeptide is Lipase 1 (LIP1) (Yarrowia lipolytica (strain CLIB 122 / E 150) (Yeast)).